The chain runs to 66 residues: Large ribosomal subunit protein bL35 (66 aa).

Residues 21–40 (KIKSTQSAKRHGMTKRSKRS) are disordered. Positions 28–40 (AKRHGMTKRSKRS) are enriched in basic residues.

The protein belongs to the bacterial ribosomal protein bL35 family.

This chain is Large ribosomal subunit protein bL35, found in Ehrlichia canis (strain Jake).